Reading from the N-terminus, the 353-residue chain is C-C chemokine receptor type 8 (353 aa).

The Extracellular segment spans residues 1-33 (MDYTMEPNVTMTDYYPDFFTAPCDAEFLLRGSM). A glycan (N-linked (GlcNAc...) asparagine) is linked at Asn8. The helical transmembrane segment at 34–61 (LYLAILYCVLFVLGLLGNSLVILVLVGC) threads the bilayer. The Cytoplasmic portion of the chain corresponds to 62–71 (KKLRSITDIY). A helical membrane pass occupies residues 72–91 (LLNLAASDLLFVLSIPFQTH). Residues 92–105 (NLLDQWVFGTAMCK) are Extracellular-facing. The cysteines at positions 104 and 181 are disulfide-linked. Residues 106–127 (VVSGLYYIGFFSSMFFITLMSV) traverse the membrane as a helical segment. Over 128-144 (DRYLAIVHAVYAIKVRT) the chain is Cytoplasmic. A helical transmembrane segment spans residues 145–169 (ASVGTALSLTVWLAAVTATIPLMVF). Over 170-200 (YQVASEDGMLQCFQFYEEQSLRWKLFTHFEI) the chain is Extracellular. The chain crosses the membrane as a helical span at residues 201-220 (NALGLLLPFAILLFCYVRIL). Over 221–236 (QQLRGCLNHNRTRAIK) the chain is Cytoplasmic. The chain crosses the membrane as a helical span at residues 237–261 (LVLTVVIVSLLFWVPFNVALFLTSL). Over 262-278 (HDLHILDGCATRQRLAL) the chain is Extracellular. Residues 279–302 (AIHVTEVISFTHCCVNPVIYAFIG) traverse the membrane as a helical segment. Topologically, residues 303–353 (EKFKKHLMDVFQKSCSHIFLYLGRQMPVGALERQLSSNQRSSHSSTLDDIL) are cytoplasmic.

It belongs to the G-protein coupled receptor 1 family. As to expression, expressed in thymus.

The protein localises to the cell membrane. Its function is as follows. Receptor for the CCL1/SCY1/TCA-3 chemokine. This chain is C-C chemokine receptor type 8 (Ccr8), found in Mus musculus (Mouse).